Consider the following 121-residue polypeptide: Large ribosomal subunit protein bL20 (121 aa).

It belongs to the bacterial ribosomal protein bL20 family.

Its function is as follows. Binds directly to 23S ribosomal RNA and is necessary for the in vitro assembly process of the 50S ribosomal subunit. It is not involved in the protein synthesizing functions of that subunit. The sequence is that of Large ribosomal subunit protein bL20 from Ruegeria pomeroyi (strain ATCC 700808 / DSM 15171 / DSS-3) (Silicibacter pomeroyi).